Reading from the N-terminus, the 297-residue chain is 4-diphosphocytidyl-2-C-methyl-D-erythritol kinase (297 aa).

Residues Lys-6 and Asp-144 contribute to the active site.

It belongs to the GHMP kinase family. IspE subfamily.

The enzyme catalyses 4-CDP-2-C-methyl-D-erythritol + ATP = 4-CDP-2-C-methyl-D-erythritol 2-phosphate + ADP + H(+). It functions in the pathway isoprenoid biosynthesis; isopentenyl diphosphate biosynthesis via DXP pathway; isopentenyl diphosphate from 1-deoxy-D-xylulose 5-phosphate: step 3/6. In terms of biological role, catalyzes the phosphorylation of the position 2 hydroxy group of 4-diphosphocytidyl-2C-methyl-D-erythritol. This chain is 4-diphosphocytidyl-2-C-methyl-D-erythritol kinase, found in Leptospira interrogans serogroup Icterohaemorrhagiae serovar copenhageni (strain Fiocruz L1-130).